A 487-amino-acid polypeptide reads, in one-letter code: ESCRT-I complex subunit vps23 (487 aa).

Residues 428–487 form the SB domain; the sequence is SERELKYYELKRKDEKLDEGIRALNQALHHESIMPASWLKGIKLLARQQFLIRDEMLQYS.

In terms of assembly, component of the ESCRT-I complex (endosomal sorting complex required for transport I).

The protein localises to the cytoplasm. The protein resides in the endosome. It is found in the late endosome membrane. Component of the ESCRT-I complex, a regulator of vesicular trafficking process. Binds to ubiquitinated cargo proteins and is required for the sorting of endocytic ubiquitinated cargos into multivesicular bodies (MVBs). Mediates the association to the ESCRT-0 complex. This chain is ESCRT-I complex subunit vps23 (sst6), found in Schizosaccharomyces pombe (strain 972 / ATCC 24843) (Fission yeast).